A 306-amino-acid chain; its full sequence is Ribosomal RNA small subunit methyltransferase A (306 aa).

Asn-37, Val-39, Gly-64, Glu-85, Asp-115, and Asn-134 together coordinate S-adenosyl-L-methionine.

This sequence belongs to the class I-like SAM-binding methyltransferase superfamily. rRNA adenine N(6)-methyltransferase family. RsmA subfamily.

The protein resides in the cytoplasm. The enzyme catalyses adenosine(1518)/adenosine(1519) in 16S rRNA + 4 S-adenosyl-L-methionine = N(6)-dimethyladenosine(1518)/N(6)-dimethyladenosine(1519) in 16S rRNA + 4 S-adenosyl-L-homocysteine + 4 H(+). Specifically dimethylates two adjacent adenosines (A1518 and A1519) in the loop of a conserved hairpin near the 3'-end of 16S rRNA in the 30S particle. May play a critical role in biogenesis of 30S subunits. The protein is Ribosomal RNA small subunit methyltransferase A of Mycobacterium leprae (strain Br4923).